We begin with the raw amino-acid sequence, 407 residues long: tRNA (guanine(9)-N1)-methyltransferase (407 aa).

Positions 1–19 (MDLDPAHKPSQAEETKEQG) are enriched in basic and acidic residues. 2 disordered regions span residues 1–105 (MDLD…VRKR) and 220–256 (ENMI…PRPE). Positions 20–32 (NEQGQVEQNQAQQ) are enriched in low complexity. Residues 91-103 (LKRKDSRIARKVR) are compositionally biased toward basic residues. One can recognise an SAM-dependent MTase TRM10-type domain in the interval 120 to 356 (ANKQKPPSVN…SVIPKRKGGK (237 aa)). Residues 263-264 (LS), Gly283, 287-291 (DKNRE), Cys295, Leu309, and 321-323 (TVL) contribute to the S-adenosyl-L-methionine site. The active-site Proton acceptor is Asp287. The segment at 353 to 407 (KGGKLKEQQGASGETQETEEAEAEDPEEENEETKDPDAEASASKQNTPKVEVTSK) is disordered. Over residues 368 to 386 (QETEEAEAEDPEEENEETK) the composition is skewed to acidic residues. The span at 394–407 (ASKQNTPKVEVTSK) shows a compositional bias: polar residues.

It belongs to the class IV-like SAM-binding methyltransferase superfamily. TRM10 family. Monomer.

The protein resides in the cytoplasm. Its subcellular location is the nucleus. The enzyme catalyses guanosine(9) in tRNA + S-adenosyl-L-methionine = N(1)-methylguanosine(9) in tRNA + S-adenosyl-L-homocysteine + H(+). S-adenosyl-L-methionine-dependent guanine N(1)-methyltransferase that catalyzes the formation of N(1)-methylguanine at position 9 (m1G9) in cytoplasmic tRNA. This Gibberella zeae (strain ATCC MYA-4620 / CBS 123657 / FGSC 9075 / NRRL 31084 / PH-1) (Wheat head blight fungus) protein is tRNA (guanine(9)-N1)-methyltransferase.